The primary structure comprises 605 residues: LysM domain receptor-like kinase 10 (605 aa).

A signal peptide spans 1–20 (MFSLPALLIGACAFAAAAVA). At 21 to 245 (ASGDGCRAGC…GMGNSLSGGA (225 aa)) the chain is on the extracellular side. 3 disulfides stabilise this stretch: Cys26–Cys89, Cys30–Cys161, and Cys87–Cys159. Asn44 carries N-linked (GlcNAc...) asparagine glycosylation. Residues 115-121 (GGDTYDA) and 142-148 (PPGRIPG) each bind chitin. Residues Asn154 and Asn158 are each glycosylated (N-linked (GlcNAc...) asparagine). A LysM domain is found at 174-221 (LTYPLWDGETLESVAAQYGFSSPAEMELIRRYNPGMGGVSGKGIVFIP). A glycan (N-linked (GlcNAc...) asparagine) is linked at Asn226. Residues 246-266 (IAGIVIACIAIFIVAIWLIIM) traverse the membrane as a helical segment. The Cytoplasmic segment spans residues 267–605 (FYRWQKFRKA…DLRDMDYHPF (339 aa)). Ser278 is subject to Phosphoserine. The Protein kinase domain occupies 317–591 (FSMEHKIGQG…RSVVVALMAL (275 aa)). ATP contacts are provided by residues 323–331 (IGQGGFGSV) and Lys344. Residue Asp436 is the Proton acceptor of the active site.

The protein belongs to the protein kinase superfamily. Ser/Thr protein kinase family.

The protein localises to the cell membrane. It catalyses the reaction L-seryl-[protein] + ATP = O-phospho-L-seryl-[protein] + ADP + H(+). It carries out the reaction L-threonyl-[protein] + ATP = O-phospho-L-threonyl-[protein] + ADP + H(+). The chain is LysM domain receptor-like kinase 10 from Oryza sativa subsp. japonica (Rice).